The primary structure comprises 69 residues: Cytoinsectotoxin-2a (69 aa).

Belongs to the cationic peptide 06 (cytoinsectotoxin) family. As to expression, expressed by the venom gland.

It localises to the secreted. Its function is as follows. Insecticidal and antimicrobial peptide. Has insecticidal activity against larvae of flesh fly S.carnaria. Has antibacterial activity against Gram-positive bacterium B.subtilis B-501 (MIC=1.25 uM) and Gram-negative bacterium E.coli DH5alpha (MIC=2.5 uM). This is Cytoinsectotoxin-2a from Lachesana tarabaevi (Spider).